A 440-amino-acid polypeptide reads, in one-letter code: Thymidine phosphorylase (440 aa).

Belongs to the thymidine/pyrimidine-nucleoside phosphorylase family. Homodimer.

It catalyses the reaction thymidine + phosphate = 2-deoxy-alpha-D-ribose 1-phosphate + thymine. The protein operates within pyrimidine metabolism; dTMP biosynthesis via salvage pathway; dTMP from thymine: step 1/2. In terms of biological role, the enzymes which catalyze the reversible phosphorolysis of pyrimidine nucleosides are involved in the degradation of these compounds and in their utilization as carbon and energy sources, or in the rescue of pyrimidine bases for nucleotide synthesis. The chain is Thymidine phosphorylase from Proteus mirabilis (strain HI4320).